Reading from the N-terminus, the 277-residue chain is Probable endonuclease 4 (277 aa).

9 residues coordinate Zn(2+): histidine 67, histidine 107, glutamate 142, aspartate 176, histidine 179, histidine 211, aspartate 224, histidine 226, and glutamate 256.

It belongs to the AP endonuclease 2 family. Zn(2+) is required as a cofactor.

It carries out the reaction Endonucleolytic cleavage to 5'-phosphooligonucleotide end-products.. Its function is as follows. Endonuclease IV plays a role in DNA repair. It cleaves phosphodiester bonds at apurinic or apyrimidinic (AP) sites, generating a 3'-hydroxyl group and a 5'-terminal sugar phosphate. This Clostridium botulinum (strain Alaska E43 / Type E3) protein is Probable endonuclease 4.